The chain runs to 96 residues: Prokineticin Bm8-f (96 aa).

An N-terminal signal peptide occupies residues 1-19 (MKCFAQIVVLLLVIAFSHG). Disulfide bonds link Cys26–Cys38, Cys32–Cys50, Cys37–Cys78, Cys60–Cys86, and Cys80–Cys95.

The protein belongs to the AVIT (prokineticin) family. Expressed by the skin glands.

Its subcellular location is the secreted. Its function is as follows. Potent agonist for both PKR1/PROKR1 and PKR2/PROKR2, and inducer of a potent and long-lasting hyperalgesia. Also potentiates capsaicin-induced TRPV1 current, when tested on DRG neurons. At subnanomolar concentrations, this protein both induces potent chemotaxis of macrophages and stimulates LPS-induced production of the pro-inflammatory cytokines IL-1 and IL-12. In vivo, potently stimulates the contraction of the guinea-pig gastrointestinal (GI) smooth muscle (nanomolar concentration). The protein is Prokineticin Bm8-f of Bombina maxima (Giant fire-bellied toad).